The following is a 620-amino-acid chain: Translocator protein BipB (620 aa).

The tract at residues Gln58 to Arg95 is disordered. Residues His66–Ala84 are compositionally biased toward basic and acidic residues. Positions Glu309 to Met339 form a coiled coil. Transmembrane regions (helical) follow at residues Phe355–Leu375, Ala401–Cys421, and Leu430–Val450.

The protein belongs to the SctE/SipB/YopB family.

It localises to the secreted. The protein localises to the host membrane. Plays a role in the bacterium-induced formation of multinucleated giant cell (MNGC), which is formed after host cell fusion, as well as in the intercellular spreading of bacteria and in the induction of apoptosis in macrophages. May act in concert with other effector proteins to induce fusion of host cell membranes. The protein is Translocator protein BipB (bipB) of Burkholderia pseudomallei (strain 1106a).